The primary structure comprises 173 residues: uncharacterized protein (173 aa).

Positions 2–171 constitute an N-acetyltransferase domain; it reads VTVREAKLED…PDLSALKTLL (170 aa).

Belongs to the acetyltransferase family.

This is an uncharacterized protein from Bacillus subtilis (strain 168).